The sequence spans 131 residues: Profilin-1 (131 aa).

An intrachain disulfide couples Cys13 to Cys115. The Involved in PIP2 interaction motif lies at Arg81–Thr97. Thr111 bears the Phosphothreonine mark.

Belongs to the profilin family. Occurs in many kinds of cells as a complex with monomeric actin in a 1:1 ratio.

It is found in the cytoplasm. Its subcellular location is the cytoskeleton. Its function is as follows. Binds to actin and affects the structure of the cytoskeleton. At high concentrations, profilin prevents the polymerization of actin, whereas it enhances it at low concentrations. By binding to PIP2, it inhibits the formation of IP3 and DG. This Phleum pratense (Common timothy) protein is Profilin-1 (PRO1).